The sequence spans 456 residues: Outer membrane protein assembly factor BamB (456 aa).

The first 19 residues, 1–19, serve as a signal peptide directing secretion; it reads MKKLLFITAPLLLSVLTAS. C20 is lipidated: N-palmitoyl cysteine. Residue C20 is the site of S-diacylglycerol cysteine attachment.

Belongs to the BamB family. In terms of assembly, part of the Bam complex.

It is found in the cell outer membrane. Its function is as follows. Part of the outer membrane protein assembly complex, which is involved in assembly and insertion of beta-barrel proteins into the outer membrane. This Francisella tularensis subsp. tularensis (strain SCHU S4 / Schu 4) protein is Outer membrane protein assembly factor BamB.